The chain runs to 72 residues: UPF0270 protein YheU (72 aa).

The protein belongs to the UPF0270 family.

The sequence is that of UPF0270 protein YheU from Shigella flexneri serotype 5b (strain 8401).